Here is a 1205-residue protein sequence, read N- to C-terminus: A disintegrin and metalloproteinase with thrombospondin motifs 2 (1205 aa).

Positions M1–A28 are cleaved as a signal peptide. A propeptide spanning residues R29 to R253 is cleaved from the precursor. N104 and N245 each carry an N-linked (GlcNAc...) asparagine glycan. In terms of domain architecture, Peptidase M12B spans Y260 to P464. Cystine bridges form between C337–C386, C380–C459, C419–C445, C486–C511, C497–C520, C506–C539, C533–C544, C567–C604, C571–C609, and C582–C594. H402 is a binding site for Zn(2+). Residue E403 is part of the active site. 2 residues coordinate Zn(2+): H406 and H412. The Disintegrin domain maps to Q474–R554. In terms of domain architecture, TSP type-1 1 spans D555–P610. Positions R685 to D687 match the Cell attachment site motif. The interval K717 to D845 is spacer. 3 consecutive TSP type-1 domains span residues V848–E906, S908–L968, and C969–P1023. 3 N-linked (GlcNAc...) asparagine glycosylation sites follow: N942, N943, and N987. Intrachain disulfides connect C981–C1017, C985–C1022, and C996–C1006. N-linked (GlcNAc...) asparagine glycosylation occurs at N1025. In terms of domain architecture, PLAC spans S1053–D1091. N-linked (GlcNAc...) asparagine glycosylation is found at N1092, N1139, and N1144. The segment at G1163–T1184 is disordered.

May belong to a multimeric complex. Binds specifically to collagen type XIV. Requires Zn(2+) as cofactor. Post-translationally, the N-terminus is blocked. The precursor is cleaved by a furin endopeptidase. In terms of processing, glycosylated. Can be O-fucosylated by POFUT2 on a serine or a threonine residue found within the consensus sequence C1-X(2)-(S/T)-C2-G of the TSP type-1 repeat domains where C1 and C2 are the first and second cysteine residue of the repeat, respectively. Fucosylated repeats can then be further glycosylated by the addition of a beta-1,3-glucose residue by the glucosyltransferase, B3GALTL. Fucosylation mediates the efficient secretion of ADAMTS family members. Can also be C-glycosylated with one or two mannose molecules on tryptophan residues within the consensus sequence W-X-X-W of the TPRs, and N-glycosylated. These other glycosylations can also facilitate secretion. In terms of tissue distribution, enzymatic activity is detected at high level in all type I collagen-rich tissues such as skin, bones, tendons and aorta and at low level in brain and thymus. The mRNA levels were disproportionately high in heart, liver, retina and muscle.

The protein localises to the secreted. Its subcellular location is the extracellular space. It is found in the extracellular matrix. The enzyme catalyses Cleaves the N-propeptide of collagen chain alpha1(I) at Pro-|-Gln and of alpha1(II) and alpha2(I) at Ala-|-Gln.. Cleaves the propeptides of type I and II collagen prior to fibril assembly. Does not act on type III collagen. Cleaves lysyl oxidase LOX at a site downstream of its propeptide cleavage site to produce a short LOX form with reduced collagen-binding activity. This chain is A disintegrin and metalloproteinase with thrombospondin motifs 2 (ADAMTS2), found in Bos taurus (Bovine).